The sequence spans 376 residues: Flap endonuclease 1 (376 aa).

An N-domain region spans residues 1-105 (MGIKGLSKLL…GELHKRKENA (105 aa)). D34 provides a ligand contact to Mg(2+). Residues R47 and R71 each contribute to the DNA site. Mg(2+) contacts are provided by D87, E159, E161, D180, and D182. The tract at residues 123–254 (QAKKLMKRTA…ITAFELIQQY (132 aa)) is I-domain. Residue E159 coordinates DNA. DNA is bound by residues G232 and D234. D234 lines the Mg(2+) pocket. The tract at residues 336–344 (AQGRLDSFF) is interaction with PCNA. Positions 354-376 (SEAASGVKRKKPTTKAKESRKKK) are disordered. Residues 360–376 (VKRKKPTTKAKESRKKK) are compositionally biased toward basic residues.

Belongs to the XPG/RAD2 endonuclease family. FEN1 subfamily. Interacts with PCNA. Three molecules of FEN1 bind to one PCNA trimer with each molecule binding to one PCNA monomer. PCNA stimulates the nuclease activity without altering cleavage specificity. The cofactor is Mg(2+). Phosphorylated. Phosphorylation upon DNA damage induces relocalization to the nuclear plasma.

It localises to the nucleus. Its subcellular location is the nucleolus. The protein resides in the nucleoplasm. It is found in the mitochondrion. Structure-specific nuclease with 5'-flap endonuclease and 5'-3' exonuclease activities involved in DNA replication and repair. During DNA replication, cleaves the 5'-overhanging flap structure that is generated by displacement synthesis when DNA polymerase encounters the 5'-end of a downstream Okazaki fragment. It enters the flap from the 5'-end and then tracks to cleave the flap base, leaving a nick for ligation. Also involved in the long patch base excision repair (LP-BER) pathway, by cleaving within the apurinic/apyrimidinic (AP) site-terminated flap. Acts as a genome stabilization factor that prevents flaps from equilibrating into structures that lead to duplications and deletions. Also possesses 5'-3' exonuclease activity on nicked or gapped double-stranded DNA, and exhibits RNase H activity. Also involved in replication and repair of rDNA and in repairing mitochondrial DNA. This chain is Flap endonuclease 1, found in Entamoeba histolytica (strain ATCC 30459 / HM-1:IMSS / ABRM).